The chain runs to 328 residues: MNDKWYRHIIGARTIKTGLATFFTSLFCMLLNLTPIFAILTAIVTIEPTAKASLKKGYKRLPATVIGALFAVVFTYVFGDQSPLSYALSATFTILICTKLNLQVGTTVAVLTSVAMIPGIHEAYVFNFFSRLLTALIGLVTAGLVNFIILPPKYYHQLEEQLALSEKKMYRLFYERCNELLLGKFSSEKTSKELSKLNIIAQKVETLMSYQRDELHYHKNEDNWKLLNRLTNRAYNNRLFISHLSNIIYLPKHTSIAFDANEKIALINISNSINGIIQKGSFARQKKSIATLKSSVKQMDEFDQNQMKSTLIYEILLIYKILDSRYAK.

The next 4 membrane-spanning stretches (helical) occupy residues 26–46, 61–81, 109–129, and 132–152; these read LFCM…IVTI, LPAT…FGDQ, AVLT…FNFF, and LLTA…ILPP.

This sequence belongs to the UPF0421 family.

Its subcellular location is the cell membrane. This is UPF0421 protein SERP1427 from Staphylococcus epidermidis (strain ATCC 35984 / DSM 28319 / BCRC 17069 / CCUG 31568 / BM 3577 / RP62A).